We begin with the raw amino-acid sequence, 333 residues long: Holliday junction branch migration complex subunit RuvB (333 aa).

A large ATPase domain (RuvB-L) region spans residues 1-182 (MEERLVSGDV…FGVISRLEYY (182 aa)). ATP-binding positions include leucine 21, arginine 22, glycine 63, lysine 66, threonine 67, threonine 68, 129-131 (EDY), arginine 172, tyrosine 182, and arginine 219. Residue threonine 67 coordinates Mg(2+). A small ATPAse domain (RuvB-S) region spans residues 183 to 253 (TTEHLTQIVM…LAKEALELLQ (71 aa)). The tract at residues 256–333 (RLGLDHIDHK…EHFGMEVPKQ (78 aa)) is head domain (RuvB-H). DNA contacts are provided by arginine 311 and arginine 316.

Belongs to the RuvB family. In terms of assembly, homohexamer. Forms an RuvA(8)-RuvB(12)-Holliday junction (HJ) complex. HJ DNA is sandwiched between 2 RuvA tetramers; dsDNA enters through RuvA and exits via RuvB. An RuvB hexamer assembles on each DNA strand where it exits the tetramer. Each RuvB hexamer is contacted by two RuvA subunits (via domain III) on 2 adjacent RuvB subunits; this complex drives branch migration. In the full resolvosome a probable DNA-RuvA(4)-RuvB(12)-RuvC(2) complex forms which resolves the HJ.

Its subcellular location is the cytoplasm. It carries out the reaction ATP + H2O = ADP + phosphate + H(+). Its function is as follows. The RuvA-RuvB-RuvC complex processes Holliday junction (HJ) DNA during genetic recombination and DNA repair, while the RuvA-RuvB complex plays an important role in the rescue of blocked DNA replication forks via replication fork reversal (RFR). RuvA specifically binds to HJ cruciform DNA, conferring on it an open structure. The RuvB hexamer acts as an ATP-dependent pump, pulling dsDNA into and through the RuvAB complex. RuvB forms 2 homohexamers on either side of HJ DNA bound by 1 or 2 RuvA tetramers; 4 subunits per hexamer contact DNA at a time. Coordinated motions by a converter formed by DNA-disengaged RuvB subunits stimulates ATP hydrolysis and nucleotide exchange. Immobilization of the converter enables RuvB to convert the ATP-contained energy into a lever motion, pulling 2 nucleotides of DNA out of the RuvA tetramer per ATP hydrolyzed, thus driving DNA branch migration. The RuvB motors rotate together with the DNA substrate, which together with the progressing nucleotide cycle form the mechanistic basis for DNA recombination by continuous HJ branch migration. Branch migration allows RuvC to scan DNA until it finds its consensus sequence, where it cleaves and resolves cruciform DNA. The protein is Holliday junction branch migration complex subunit RuvB of Geobacillus sp. (strain WCH70).